Here is a 290-residue protein sequence, read N- to C-terminus: tRNA (guanine-N(7)-)-methyltransferase (290 aa).

Basic and acidic residues-rich tracts occupy residues Met-1–Arg-12 and Ala-20–Lys-43. Residues Met-1–Ser-49 form a disordered region. 4 residues coordinate S-adenosyl-L-methionine: Glu-104, Asp-129, Asp-156, and Asp-179. Residue Asp-179 is part of the active site. Residues Lys-183, Asp-215, and Thr-252 to Glu-255 each bind substrate.

The protein belongs to the class I-like SAM-binding methyltransferase superfamily. TrmB family.

It carries out the reaction guanosine(46) in tRNA + S-adenosyl-L-methionine = N(7)-methylguanosine(46) in tRNA + S-adenosyl-L-homocysteine. Its pathway is tRNA modification; N(7)-methylguanine-tRNA biosynthesis. Its function is as follows. Catalyzes the formation of N(7)-methylguanine at position 46 (m7G46) in tRNA. The polypeptide is tRNA (guanine-N(7)-)-methyltransferase (Streptomyces avermitilis (strain ATCC 31267 / DSM 46492 / JCM 5070 / NBRC 14893 / NCIMB 12804 / NRRL 8165 / MA-4680)).